The sequence spans 372 residues: Erythronate-4-phosphate dehydrogenase (372 aa).

2 residues coordinate substrate: Ser-45 and Thr-66. NAD(+) is bound at residue Asp-146. The active site involves Arg-209. Asp-233 is an NAD(+) binding site. Residue Glu-238 is part of the active site. Residue His-255 is the Proton donor of the active site. Gly-258 serves as a coordination point for NAD(+). A substrate-binding site is contributed by Tyr-259.

This sequence belongs to the D-isomer specific 2-hydroxyacid dehydrogenase family. PdxB subfamily. Homodimer.

The protein localises to the cytoplasm. It catalyses the reaction 4-phospho-D-erythronate + NAD(+) = (R)-3-hydroxy-2-oxo-4-phosphooxybutanoate + NADH + H(+). The protein operates within cofactor biosynthesis; pyridoxine 5'-phosphate biosynthesis; pyridoxine 5'-phosphate from D-erythrose 4-phosphate: step 2/5. Functionally, catalyzes the oxidation of erythronate-4-phosphate to 3-hydroxy-2-oxo-4-phosphonooxybutanoate. This is Erythronate-4-phosphate dehydrogenase from Blochmanniella floridana.